Here is a 182-residue protein sequence, read N- to C-terminus: uncharacterized protein (182 aa).

One can recognise a Macro domain in the interval 1 to 170 (MIVKIIKGDI…IFVNIFEREL (170 aa)).

This is an uncharacterized protein from Sulfurisphaera tokodaii (strain DSM 16993 / JCM 10545 / NBRC 100140 / 7) (Sulfolobus tokodaii).